Consider the following 942-residue polypeptide: Calcium-activated chloride channel regulator 2 (942 aa).

The signal sequence occupies residues 1–32; that stretch reads MTHRDSTGPVIGLKLVTLLFTLSPELLFLGAG. Residues 33–905 lie on the Extracellular side of the membrane; that stretch reads LKLKENGYDG…SRDDLILKGV (873 aa). Positions 54–205 are metalloprotease domain; sequence DLKLITNIKE…CSSDITGVFV (152 aa). N-linked (GlcNAc...) asparagine glycans are attached at residues asparagine 74 and asparagine 97. Histidine 164 is a Zn(2+) binding site. Glutamate 165 is a catalytic residue. Zn(2+) is bound by residues histidine 168 and aspartate 175. Residues asparagine 231, asparagine 235, asparagine 254, and asparagine 286 are each glycosylated (N-linked (GlcNAc...) asparagine). Residues 311 to 483 enclose the VWFA domain; it reads VVCLVIDVSR…NGMTEAFVRI (173 aa). N-linked (GlcNAc...) asparagine glycosylation is found at asparagine 522, asparagine 580, asparagine 637, and asparagine 821. A helical membrane pass occupies residues 906–926; it reads LTTVGLIAILCLIMVVAHCIF. Over 927–942 the chain is Cytoplasmic; the sequence is NRKKRPSRKENETKFL.

The protein belongs to the CLCR family. The translation product is autoproteolytically cleaved by the metalloprotease domain in the endoplasmic reticulum into a N-terminal and a C-terminal products that remain physically associated with each other. The cleavage is necessary for calcium-activated chloride channel (CaCC) activation activity. Post-translationally, N-glycosylated. As to expression, highly expressed in eye, spleen, lung, kidney, uterus, and endothelial cells. Weakly expressed in heart and throughout the gastrointestinal tract. Highly expressed in mammary cell lines. Its expression in immortalized cell line HC11 correlates with slow or arrested growth. Re-expression in mammary tumor cells reduces colony survival.

Its subcellular location is the cell membrane. It is found in the basal cell membrane. It localises to the cell junction. In terms of biological role, plays a role in modulating chloride current across the plasma membrane in a calcium-dependent manner, and cell adhesion. Involved in basal cell adhesion and/or stratification of squamous epithelia. May act as a tumor suppressor in breast and colorectal cancer. Plays a key role for cell adhesion in the beginning stages of lung metastasis via the binding to ITGB4. The chain is Calcium-activated chloride channel regulator 2 (Clca2) from Mus musculus (Mouse).